The chain runs to 329 residues: Glycerol-3-phosphate dehydrogenase [NAD(P)+] (329 aa).

NADPH is bound by residues W11, R30, and K103. 3 residues coordinate sn-glycerol 3-phosphate: K103, G132, and S134. Residue A136 participates in NADPH binding. The sn-glycerol 3-phosphate site is built by K187, D240, S250, R251, and N252. K187 functions as the Proton acceptor in the catalytic mechanism. R251 contacts NADPH. Residues V275 and E277 each contribute to the NADPH site.

The protein belongs to the NAD-dependent glycerol-3-phosphate dehydrogenase family.

It localises to the cytoplasm. It catalyses the reaction sn-glycerol 3-phosphate + NAD(+) = dihydroxyacetone phosphate + NADH + H(+). The catalysed reaction is sn-glycerol 3-phosphate + NADP(+) = dihydroxyacetone phosphate + NADPH + H(+). It participates in membrane lipid metabolism; glycerophospholipid metabolism. Functionally, catalyzes the reduction of the glycolytic intermediate dihydroxyacetone phosphate (DHAP) to sn-glycerol 3-phosphate (G3P), the key precursor for phospholipid synthesis. The chain is Glycerol-3-phosphate dehydrogenase [NAD(P)+] from Methylobacillus flagellatus (strain ATCC 51484 / DSM 6875 / VKM B-1610 / KT).